The following is a 190-amino-acid chain: Glutathione peroxidase 2 (190 aa).

Sec40 is an active-site residue. Sec40 is a non-standard amino acid (selenocysteine).

This sequence belongs to the glutathione peroxidase family. As to quaternary structure, homotetramer.

It is found in the cytoplasm. Its subcellular location is the cytosol. It carries out the reaction 2 glutathione + H2O2 = glutathione disulfide + 2 H2O. It catalyses the reaction a hydroperoxy polyunsaturated fatty acid + 2 glutathione = a hydroxy polyunsaturated fatty acid + glutathione disulfide + H2O. The enzyme catalyses tert-butyl hydroperoxide + 2 glutathione = tert-butanol + glutathione disulfide + H2O. The catalysed reaction is cumene hydroperoxide + 2 glutathione = 2-phenylpropan-2-ol + glutathione disulfide + H2O. It carries out the reaction (13S)-hydroperoxy-(9Z,11E)-octadecadienoate + 2 glutathione = (13S)-hydroxy-(9Z,11E)-octadecadienoate + glutathione disulfide + H2O. It catalyses the reaction (5S)-hydroperoxy-(6E,8Z,11Z,14Z)-eicosatetraenoate + 2 glutathione = (5S)-hydroxy-(6E,8Z,11Z,14Z)-eicosatetraenoate + glutathione disulfide + H2O. The enzyme catalyses (12R)-hydroperoxy-(5Z,8Z,10E,14Z)-eicosatetraenoate + 2 glutathione = (12R)-hydroxy-(5Z,8Z,10E,14Z)-eicosatetraenoate + glutathione disulfide + H2O. The catalysed reaction is (15S)-hydroperoxy-(5Z,8Z,11Z,13E)-eicosatetraenoate + 2 glutathione = (15S)-hydroxy-(5Z,8Z,11Z,13E)-eicosatetraenoate + glutathione disulfide + H2O. Functionally, catalyzes the reduction of hydroperoxides in a glutathione-dependent manner thus regulating cellular redox homeostasis. Can reduce small soluble hydroperoxides such as H2O2, cumene hydroperoxide and tert-butyl hydroperoxide, as well as several fatty acid-derived hydroperoxides. Cannot reduce phosphatidycholine hydroperoxide. The polypeptide is Glutathione peroxidase 2 (GPX2) (Sapajus apella (Brown-capped capuchin)).